Reading from the N-terminus, the 89-residue chain is Acyl carrier protein MbtL (89 aa).

The Carrier domain occupies 8–83 (NHVSAELLGI…DLQAAIAAEP (76 aa)). O-(pantetheine 4'-phosphoryl)serine is present on serine 43.

4'-phosphopantetheine is transferred from CoA to a specific serine of apo-ACP, leading to the activated holo-ACP form.

Its subcellular location is the cytoplasm. It functions in the pathway siderophore biosynthesis; mycobactin biosynthesis. Functionally, acyl carrier protein involved in the formation of acyl-S-ACP intermediates within the mycobactin biosynthesis process. This Mycolicibacterium paratuberculosis (strain ATCC BAA-968 / K-10) (Mycobacterium paratuberculosis) protein is Acyl carrier protein MbtL (mbtL).